The primary structure comprises 126 residues: Aspartate 1-decarboxylase (126 aa).

Ser-25 (schiff-base intermediate with substrate; via pyruvic acid) is an active-site residue. The residue at position 25 (Ser-25) is a Pyruvic acid (Ser). A substrate-binding site is contributed by Thr-57. The active-site Proton donor is Tyr-58. Residue 73 to 75 coordinates substrate; sequence GSA.

It belongs to the PanD family. In terms of assembly, heterooctamer of four alpha and four beta subunits. Pyruvate serves as cofactor. Is synthesized initially as an inactive proenzyme, which is activated by self-cleavage at a specific serine bond to produce a beta-subunit with a hydroxyl group at its C-terminus and an alpha-subunit with a pyruvoyl group at its N-terminus.

It localises to the cytoplasm. The enzyme catalyses L-aspartate + H(+) = beta-alanine + CO2. It participates in cofactor biosynthesis; (R)-pantothenate biosynthesis; beta-alanine from L-aspartate: step 1/1. Its function is as follows. Catalyzes the pyruvoyl-dependent decarboxylation of aspartate to produce beta-alanine. The polypeptide is Aspartate 1-decarboxylase (Acidovorax ebreus (strain TPSY) (Diaphorobacter sp. (strain TPSY))).